The primary structure comprises 739 residues: MDKVTPAKLSWREDELGNVVPVSEIFGDVYYSLVDGLNESRYVFLTQNKLPERFEALFSRANSSAASNFSIAELGFGTGLNILATWQLWEHSKQQFHTYFNSQTNLQTSSQDHLKGSRSLTPRLHIISTEKHPLTHADLSRSLESWKHKDTSLVPFVDQLLALYPTLISGCHRLQLAEDVTLDLWLGDACFSLQQLANSYDTLPYGAHIDAWYLDGFAPACNESLWADQIFEQVKRLSKPGTTAATFSSAGVVKRGLMAAGFEIKKTKGFGRKREMLTATKLEPVAVSDDTSDNQGATEYDAKSTLALRSKEQVTLDTHAVTPNEQIAVIGAGVCGLMAAWSLAQRGNAVSLIDKEAPLAGASGNPRALLAPKMTPLAHVAEHLHSISYLYSQRFYRQIDQGEHKIFTPTTTLDLLQKSNVDVHQIAEYPEQMATTLSLDSARDISGLQQQDLTANLYLPQSGLINPKALADKVLTHPNISFKQANIKRITPLQAEAFDDVTEVSEVIEVTADITVQPAKRTKVMLHCESGEVLSVNRVVIAAAFESQSLDARIFEFRKIRGQLSWFEPTTEQLQALPTLPLKYSGYCAPFIPQPGDEAVNSVTPSVPTFLLGASFIRNDLDDEIRLSEHAINHQKLLTALPELSAVLPLPDTEADLYQRWQARVGIRSQTPDYHPLVGAVDEQGLIWTLSGMGSKGYAFAPLCAQVLADMMTAQFVPLPAALLAKLSVHRSSLKKPLS.

The interval 1–282 is tRNA (mnm(5)s(2)U34)-methyltransferase; that stretch reads MDKVTPAKLS…KREMLTATKL (282 aa). The tract at residues 330–739 is FAD-dependent cmnm(5)s(2)U34 oxidoreductase; that stretch reads IGAGVCGLMA…HRSSLKKPLS (410 aa).

In the N-terminal section; belongs to the methyltransferase superfamily. tRNA (mnm(5)s(2)U34)-methyltransferase family. This sequence in the C-terminal section; belongs to the DAO family. FAD is required as a cofactor.

It localises to the cytoplasm. The catalysed reaction is 5-aminomethyl-2-thiouridine(34) in tRNA + S-adenosyl-L-methionine = 5-methylaminomethyl-2-thiouridine(34) in tRNA + S-adenosyl-L-homocysteine + H(+). Its function is as follows. Catalyzes the last two steps in the biosynthesis of 5-methylaminomethyl-2-thiouridine (mnm(5)s(2)U) at the wobble position (U34) in tRNA. Catalyzes the FAD-dependent demodification of cmnm(5)s(2)U34 to nm(5)s(2)U34, followed by the transfer of a methyl group from S-adenosyl-L-methionine to nm(5)s(2)U34, to form mnm(5)s(2)U34. This is tRNA 5-methylaminomethyl-2-thiouridine biosynthesis bifunctional protein MnmC from Psychrobacter sp. (strain PRwf-1).